Reading from the N-terminus, the 109-residue chain is MNKKYLLTFLLTAYCATFLRFYFKNNFVISIIGSFLYGFFISRKISKSKKEILFSGFFACFTSFSGFVHFLYQFIIQGYYLKLFIYLNVIVILNLIIMYIGFQLSRKIT.

A run of 3 helical transmembrane segments spans residues 21-41 (FYFK…GFFI), 52-72 (ILFS…HFLY), and 83-103 (LFIY…IGFQ).

It belongs to the fluoride channel Fluc/FEX (TC 1.A.43) family.

It localises to the cell inner membrane. The catalysed reaction is fluoride(in) = fluoride(out). Functionally, fluoride-specific ion channel. Important for reducing fluoride concentration in the cell, thus reducing its toxicity. This chain is Fluoride-specific ion channel FluC 1, found in Prochlorococcus marinus subsp. pastoris (strain CCMP1986 / NIES-2087 / MED4).